A 33-amino-acid polypeptide reads, in one-letter code: Brevinin-2HSa (33 aa).

Cysteine 27 and cysteine 33 are oxidised to a cystine.

Expressed by the skin glands.

It localises to the secreted. Functionally, has antibacterial activity against the Gram-positive bacterium S.aureus ATCC 25923 (MIC=18 uM) and the Gram-negative bacterium E.coli ATCC 25726 (MIC=36 uM). In Odorrana hosii (Hose's rock frog), this protein is Brevinin-2HSa.